We begin with the raw amino-acid sequence, 293 residues long: Fructose-bisphosphate aldolase (293 aa).

Serine 50 is a D-glyceraldehyde 3-phosphate binding site. Aspartate 85 acts as the Proton donor in catalysis. 4 residues coordinate Zn(2+): histidine 86, aspartate 106, glutamate 136, and histidine 178. Glycine 179 contacts dihydroxyacetone phosphate. Histidine 208 serves as a coordination point for Zn(2+). Dihydroxyacetone phosphate is bound by residues 209–211 (GGS) and 230–233 (NVNT).

This sequence belongs to the class II fructose-bisphosphate aldolase family. The cofactor is Zn(2+).

It catalyses the reaction beta-D-fructose 1,6-bisphosphate = D-glyceraldehyde 3-phosphate + dihydroxyacetone phosphate. It participates in carbohydrate degradation; glycolysis; D-glyceraldehyde 3-phosphate and glycerone phosphate from D-glucose: step 4/4. Catalyzes the aldol condensation of dihydroxyacetone phosphate (DHAP or glycerone-phosphate) with glyceraldehyde 3-phosphate (G3P) to form fructose 1,6-bisphosphate (FBP) in gluconeogenesis and the reverse reaction in glycolysis. The protein is Fructose-bisphosphate aldolase (fba) of Streptococcus pyogenes serotype M1.